We begin with the raw amino-acid sequence, 2214 residues long: Genome polyprotein (2214 aa).

Disordered regions lie at residues 1 to 21 (MGAQ…VATG) and 600 to 619 (KPQK…VNSQ). Glycine 2 carries the N-myristoyl glycine; by host lipid modification. Over 2–1525 (GAQVSSQKVG…NLNRAMTILQ (1524 aa)) the chain is Cytoplasmic. Amphipathic alpha-helix stretches follow at residues 580–601 (QGIE…QPKP) and 581–601 (GIEE…QPKP). The segment covering 606 to 619 (TAQSTPSTSGVNSQ) has biased composition (polar residues). Active-site for protease 2A activity residues include histidine 906 and aspartate 924. The Zn(2+) site is built by cysteine 941 and cysteine 943. Cysteine 995 acts as the For protease 2A activity in catalysis. The Zn(2+) site is built by cysteine 1001 and histidine 1003. Positions 1133–1205 (GDSWLKKFTE…HQSCPSQEQQ (73 aa)) are membrane-binding. The interval 1133–1271 (GDSWLKKFTE…SPGTGKSIAT (139 aa)) is oligomerization. Residues 1154–1158 (SNKIS) are RNA-binding. An SF3 helicase domain is found at 1237-1393 (ENTINNYIQF…SEHSIKGKLN (157 aa)). Position 1261–1268 (1261–1268 (GSPGTGKS)) interacts with ATP. Zn(2+) is bound by residues cysteine 1401, cysteine 1404, cysteine 1413, and cysteine 1418. A C4-type zinc finger spans residues 1401-1418 (CKDCPQPANFKKCCPLVC). Residues 1445-1452 (ERNRRANI) are RNA-binding. Residues 1456–1461 (MEALFQ) form an oligomerization region. Residues 1526-1541 (AVTTFAAVAAVVYVMY) lie within the membrane without spanning it. The Cytoplasmic portion of the chain corresponds to 1542-2214 (KLFAGHQGAY…TLYRRWLDSF (673 aa)). The residue at position 1551 (tyrosine 1551) is an O-(5'-phospho-RNA)-tyrosine. Residues 1571–1749 (GPGFDYAVAM…FAAALKRSYF (179 aa)) form the Peptidase C3 domain. Residues histidine 1610, glutamate 1641, and cysteine 1717 each act as for protease 3C activity in the active site. The region spanning 1980–2095 (EKLFAFDYTG…SYPHEVDASL (116 aa)) is the RdRp catalytic domain. Residues aspartate 1986 and aspartate 2081 each coordinate Mg(2+).

It belongs to the picornaviruses polyprotein family. As to quaternary structure, interacts with capsid protein VP1 and capsid protein VP3 to form heterotrimeric protomers. Interacts with capsid protein VP0, and capsid protein VP3 to form heterotrimeric protomers. Five protomers subsequently associate to form pentamers which serve as building blocks for the capsid. Interacts with capsid protein VP2, capsid protein VP3 and capsid protein VP4 following cleavage of capsid protein VP0. In terms of assembly, interacts with capsid protein VP1 and capsid protein VP3 in the mature capsid. As to quaternary structure, interacts with capsid protein VP0 and capsid protein VP1 to form heterotrimeric protomers. Five protomers subsequently associate to form pentamers which serve as building blocks for the capsid. Interacts with capsid protein VP4 in the mature capsid. Interacts with protein 2C; this interaction may be important for virion morphogenesis. Interacts with capsid protein VP1 and capsid protein VP3. In terms of assembly, homodimer. As to quaternary structure, homohexamer; forms a hexameric ring structure with 6-fold symmetry characteristic of AAA+ ATPases. Interacts (via N-terminus) with host RTN3 (via reticulon domain); this interaction is important for viral replication. Interacts with capsid protein VP3; this interaction may be important for virion morphogenesis. Interacts with protein 3CD. In terms of assembly, homodimer. Interacts with host GBF1. Interacts (via GOLD domain) with host ACBD3 (via GOLD domain); this interaction allows the formation of a viral protein 3A/ACBD3 heterotetramer with a 2:2 stoichiometry, which will stimulate the recruitment of host PI4KB in order to synthesize PI4P at the viral RNA replication sites. As to quaternary structure, interacts with RNA-directed RNA polymerase. Interacts with protein 3AB and with RNA-directed RNA polymerase. In terms of assembly, interacts with Viral protein genome-linked and with protein 3CD. It depends on Mg(2+) as a cofactor. Post-translationally, specific enzymatic cleavages in vivo by the viral proteases yield processing intermediates and the mature proteins. Myristoylation is required for the formation of pentamers during virus assembly. Further assembly of 12 pentamers and a molecule of genomic RNA generates the provirion. In terms of processing, during virion maturation, immature virions are rendered infectious following cleavage of VP0 into VP4 and VP2. This maturation seems to be an autocatalytic event triggered by the presence of RNA in the capsid and it is followed by a conformational change infectious virion. Post-translationally, myristoylation is required during RNA encapsidation and formation of the mature virus particle. VPg is uridylylated by the polymerase into VPg-pUpU. This acts as a nucleotide-peptide primer for the genomic RNA replication.

Its subcellular location is the virion. It is found in the host cytoplasm. The protein localises to the host cytoplasmic vesicle membrane. It localises to the host nucleus. It carries out the reaction a ribonucleoside 5'-triphosphate + H2O = a ribonucleoside 5'-diphosphate + phosphate + H(+). The enzyme catalyses Selective cleavage of Tyr-|-Gly bond in the picornavirus polyprotein.. It catalyses the reaction RNA(n) + a ribonucleoside 5'-triphosphate = RNA(n+1) + diphosphate. The catalysed reaction is Selective cleavage of Gln-|-Gly bond in the poliovirus polyprotein. In other picornavirus reactions Glu may be substituted for Gln, and Ser or Thr for Gly.. With respect to regulation, replication or transcription is subject to high level of random mutations by the nucleotide analog ribavirin. Its function is as follows. Forms an icosahedral capsid of pseudo T=3 symmetry with capsid proteins VP2 and VP3. The capsid is 300 Angstroms in diameter, composed of 60 copies of each capsid protein and enclosing the viral positive strand RNA genome. Capsid protein VP1 mainly forms the vertices of the capsid. Capsid protein VP1 interacts with host cell receptor to provide virion attachment to target host cells. This attachment induces virion internalization. Tyrosine kinases are probably involved in the entry process. After binding to its receptor, the capsid undergoes conformational changes. Capsid protein VP1 N-terminus (that contains an amphipathic alpha-helix) and capsid protein VP4 are externalized. Together, they shape a pore in the host membrane through which viral genome is translocated to host cell cytoplasm. Forms an icosahedral capsid of pseudo T=3 symmetry with capsid proteins VP2 and VP3. The capsid is 300 Angstroms in diameter, composed of 60 copies of each capsid protein and enclosing the viral positive strand RNA genome. Functionally, lies on the inner surface of the capsid shell. After binding to the host receptor, the capsid undergoes conformational changes. Capsid protein VP4 is released, Capsid protein VP1 N-terminus is externalized, and together, they shape a pore in the host membrane through which the viral genome is translocated into the host cell cytoplasm. In terms of biological role, component of immature procapsids, which is cleaved into capsid proteins VP4 and VP2 after maturation. Allows the capsid to remain inactive before the maturation step. Its function is as follows. Cysteine protease that cleaves viral polyprotein and specific host proteins. It is responsible for the autocatalytic cleavage between the P1 and P2 regions, which is the first cleavage occurring in the polyprotein. Also cleaves the host translation initiation factor EIF4G1, in order to shut down the capped cellular mRNA translation. Inhibits the host nucleus-cytoplasm protein and RNA trafficking by cleaving host members of the nuclear pores. Counteracts stress granule formation probably by antagonizing its assembly or promoting its dissassembly. Cleaves and inhibits host IFIH1/MDA5, thereby inhibiting the type-I IFN production and the establishment of the antiviral state. Cleaves and inhibits host MAVS, thereby inhibiting the type-I IFN production and the establishment of the antiviral state. Plays an essential role in the virus replication cycle by acting as a viroporin. Creates a pore in the host endoplasmic reticulum and as a consequence releases Ca2+ in the cytoplasm of infected cell. In turn, high levels of cytoplasmic calcium may trigger membrane trafficking and transport of viral ER-associated proteins to viroplasms, sites of viral genome replication. Functionally, induces and associates with structural rearrangements of intracellular membranes. Displays RNA-binding, nucleotide binding and NTPase activities. May play a role in virion morphogenesis and viral RNA encapsidation by interacting with the capsid protein VP3. In terms of biological role, localizes the viral replication complex to the surface of membranous vesicles. Together with protein 3CD binds the Cis-Active RNA Element (CRE) which is involved in RNA synthesis initiation. Acts as a cofactor to stimulate the activity of 3D polymerase, maybe through a nucleid acid chaperone activity. Its function is as follows. Localizes the viral replication complex to the surface of membranous vesicles. It inhibits host cell endoplasmic reticulum-to-Golgi apparatus transport and causes the disassembly of the Golgi complex, possibly through GBF1 interaction. This would result in depletion of MHC, trail receptors and IFN receptors at the host cell surface. Plays an essential role in viral RNA replication by recruiting ACBD3 and PI4KB at the viral replication sites, thereby allowing the formation of the rearranged membranous structures where viral replication takes place. Acts as a primer for viral RNA replication and remains covalently bound to viral genomic RNA. VPg is uridylylated prior to priming replication into VPg-pUpU. The oriI viral genomic sequence may act as a template for this. The VPg-pUpU is then used as primer on the genomic RNA poly(A) by the RNA-dependent RNA polymerase to replicate the viral genome. During genome replication, the VPg-RNA linkage is removed by the host TDP2, thereby accelerating replication. During the late stage of the replication cycle, host TDP2 is excluded from sites of viral RNA synthesis and encapsidation, allowing for the generation of progeny virions. Functionally, involved in the viral replication complex and viral polypeptide maturation. It exhibits protease activity with a specificity and catalytic efficiency that is different from protease 3C. Protein 3CD lacks polymerase activity. Protein 3CD binds to the 5'UTR of the viral genome. In terms of biological role, replicates the viral genomic RNA on the surface of intracellular membranes. May form linear arrays of subunits that propagate along a strong head-to-tail interaction called interface-I. Covalently attaches UMP to a tyrosine of VPg, which is used to prime RNA synthesis. The positive stranded RNA genome is first replicated at virus induced membranous vesicles, creating a dsRNA genomic replication form. This dsRNA is then used as template to synthesize positive stranded RNA genomes. ss(+)RNA genomes are either translated, replicated or encapsidated. Its function is as follows. Major viral protease that mediates proteolytic processing of the polyprotein. Cleaves host EIF5B, contributing to host translation shutoff. Also cleaves host PABPC1, contributing to host translation shutoff. Cleaves host NLRP1, triggers host N-glycine-mediated degradation of the autoinhibitory NLRP1 N-terminal fragment. This Coxsackievirus A24 (strain EH24/70) protein is Genome polyprotein.